The following is a 142-amino-acid chain: Large ribosomal subunit protein uL11 (142 aa).

It belongs to the universal ribosomal protein uL11 family. In terms of assembly, part of the ribosomal stalk of the 50S ribosomal subunit. Interacts with L10 and the large rRNA to form the base of the stalk. L10 forms an elongated spine to which L12 dimers bind in a sequential fashion forming a multimeric L10(L12)X complex. One or more lysine residues are methylated.

Functionally, forms part of the ribosomal stalk which helps the ribosome interact with GTP-bound translation factors. This chain is Large ribosomal subunit protein uL11, found in Mycobacterium sp. (strain MCS).